The following is a 208-amino-acid chain: Thymidylate kinase (208 aa).

7–14 (GIDGAGKT) provides a ligand contact to ATP.

Belongs to the thymidylate kinase family.

It catalyses the reaction dTMP + ATP = dTDP + ADP. Functionally, phosphorylation of dTMP to form dTDP in both de novo and salvage pathways of dTTP synthesis. The sequence is that of Thymidylate kinase (tmk) from Xylella fastidiosa (strain 9a5c).